The primary structure comprises 523 residues: MSDVVPVRNALISVSDKMGLADFAAGLSAAGVTIYSTGGTRAHLEQSGIKVEDVAEYTGFPEMLDGRVKTLHPRIFAGILARRDLDDHMDTIADHDIEPFDLVVVNLYPFAATVSRSGATRAECIEQIDIGGPSLVRAAAKNHGDVAIATSPEQYGDVLDQLETLGGTTDELRTQLAAEAFDHTAGYDRAIADYMQGDAVGGEFPASMHVSLRRKTQLRYGENPHQRAALYSDSSDRSANLVSARQISGKELSYNNLLDLDAALDIARGFAEPAVSVIKHNNPCGAATGDTLSEAVDKAMAGDPLSAFGSVIGMNRTLDEATAEFLCQPGLFIEAIVAPDFEAGAVGLLTTKPRWKDNVRLMQVGRLDEPARKVSRRFISGGMLVQDADRMVSSPLQWNTVTETPVDDDLWDDISFGWEMVRHVKSNAIVLAKDTSLIGVGAGQMSRVDSVEISIKKAAERSEGSILASDAFFPFPDSIEAAAKAGVLAIIQPGGSRRDDEVIAACDEHEIAMVFTGRRHFKH.

Positions 1–150 constitute an MGS-like domain; the sequence is MSDVVPVRNA…KNHGDVAIAT (150 aa).

Belongs to the PurH family.

The enzyme catalyses (6R)-10-formyltetrahydrofolate + 5-amino-1-(5-phospho-beta-D-ribosyl)imidazole-4-carboxamide = 5-formamido-1-(5-phospho-D-ribosyl)imidazole-4-carboxamide + (6S)-5,6,7,8-tetrahydrofolate. It carries out the reaction IMP + H2O = 5-formamido-1-(5-phospho-D-ribosyl)imidazole-4-carboxamide. Its pathway is purine metabolism; IMP biosynthesis via de novo pathway; 5-formamido-1-(5-phospho-D-ribosyl)imidazole-4-carboxamide from 5-amino-1-(5-phospho-D-ribosyl)imidazole-4-carboxamide (10-formyl THF route): step 1/1. It functions in the pathway purine metabolism; IMP biosynthesis via de novo pathway; IMP from 5-formamido-1-(5-phospho-D-ribosyl)imidazole-4-carboxamide: step 1/1. The sequence is that of Bifunctional purine biosynthesis protein PurH from Rhodopirellula baltica (strain DSM 10527 / NCIMB 13988 / SH1).